The sequence spans 354 residues: uncharacterized protein (354 aa).

2 disordered regions span residues 1 to 74 (MGTK…ENCR) and 87 to 115 (SESG…QRAS). Residue lysine 19 is modified to N6-acetyllysine. A compositionally biased stretch (low complexity) spans 32 to 41 (EGPSSNSSFH). Positions 45–54 (EEGTDLEGDM) are enriched in acidic residues. 2 positions are modified to phosphoserine: serine 115 and serine 174. The span at 182–199 (QGSSQDLPMQANLSQSNE) shows a compositional bias: polar residues. Disordered stretches follow at residues 182–208 (QGSS…GRDR) and 235–298 (QVAD…DELS). A Phosphotyrosine modification is found at tyrosine 291. At serine 292 the chain carries Phosphoserine.

This is an uncharacterized protein from Mus musculus (Mouse).